A 506-amino-acid chain; its full sequence is Probable alpha-L-arabinofuranosidase B (506 aa).

A signal peptide spans 1–26 (MLLPRGFNRAVVTALGVVGTGTLVAA). Residues 27-343 (GPCDIYSSGG…ANIVAAKYAV (317 aa)) are catalytic. 3 disulfide bridges follow: C29–C39, C89–C94, and C184–C185. D227 contributes to the substrate binding site. Catalysis depends on E229, which acts as the Nucleophile. Substrate is bound at residue N230. N285 carries an N-linked (GlcNAc...) asparagine glycan. A substrate-binding site is contributed by G304. The active-site Proton donor is the D305. Residues 344–506 (APLTSGPSLT…VSWVVSTSFA (163 aa)) are ABD. The N-linked (GlcNAc...) asparagine glycan is linked to N375. Residues C409 and C447 are joined by a disulfide bond. H424, F427, D443, H471, L476, and D496 together coordinate substrate.

It belongs to the glycosyl hydrolase 54 family.

It is found in the secreted. It catalyses the reaction Hydrolysis of terminal non-reducing alpha-L-arabinofuranoside residues in alpha-L-arabinosides.. It participates in glycan metabolism; L-arabinan degradation. Functionally, alpha-L-arabinofuranosidase involved in the degradation of arabinoxylan, a major component of plant hemicellulose. Able to hydrolyze 1,5-, 1,3- and 1,2-alpha-linkages not only in L-arabinofuranosyl oligosaccharides, but also in polysaccharides containing terminal non-reducing L-arabinofuranoses in side chains, like L-arabinan, arabinogalactan and arabinoxylan. The polypeptide is Probable alpha-L-arabinofuranosidase B (abfB) (Aspergillus terreus (strain NIH 2624 / FGSC A1156)).